The chain runs to 85 residues: Translation initiation factor IF-1 (85 aa).

The S1-like domain occupies 1-72 (MAKEELLEMR…TKARITYRFM (72 aa)).

This sequence belongs to the IF-1 family. Component of the 30S ribosomal translation pre-initiation complex which assembles on the 30S ribosome in the order IF-2 and IF-3, IF-1 and N-formylmethionyl-tRNA(fMet); mRNA recruitment can occur at any time during PIC assembly.

It is found in the cytoplasm. One of the essential components for the initiation of protein synthesis. Stabilizes the binding of IF-2 and IF-3 on the 30S subunit to which N-formylmethionyl-tRNA(fMet) subsequently binds. Helps modulate mRNA selection, yielding the 30S pre-initiation complex (PIC). Upon addition of the 50S ribosomal subunit IF-1, IF-2 and IF-3 are released leaving the mature 70S translation initiation complex. This Erythrobacter litoralis (strain HTCC2594) protein is Translation initiation factor IF-1.